The primary structure comprises 165 residues: Phosphopantetheine adenylyltransferase (165 aa).

Substrate is bound at residue threonine 10. ATP is bound by residues 10 to 11 (TF) and histidine 18. Substrate-binding residues include lysine 42, leucine 75, and arginine 89. ATP contacts are provided by residues 90–92 (GVR), glutamate 100, and 125–131 (VSFISSS).

This sequence belongs to the bacterial CoaD family. In terms of assembly, homohexamer. It depends on Mg(2+) as a cofactor.

The protein localises to the cytoplasm. It catalyses the reaction (R)-4'-phosphopantetheine + ATP + H(+) = 3'-dephospho-CoA + diphosphate. It functions in the pathway cofactor biosynthesis; coenzyme A biosynthesis; CoA from (R)-pantothenate: step 4/5. In terms of biological role, reversibly transfers an adenylyl group from ATP to 4'-phosphopantetheine, yielding dephospho-CoA (dPCoA) and pyrophosphate. The chain is Phosphopantetheine adenylyltransferase from Buchnera aphidicola subsp. Schizaphis graminum (strain Sg).